Consider the following 317-residue polypeptide: Zinc finger protein 771 (317 aa).

Acidic residues predominate over residues 1–17; sequence MPGEQQAEEEEEEEMQE. Residues 1–63 form a disordered region; that stretch reads MPGEQQAEEE…APSADPARPH (63 aa). Residue Lys33 forms a Glycyl lysine isopeptide (Lys-Gly) (interchain with G-Cter in SUMO2) linkage. Residues 33-49 show a composition bias toward basic and acidic residues; the sequence is KYEVVKLKIPMDNKEVP. 8 C2H2-type zinc fingers span residues 63–85, 91–113, 119–141, 147–169, 175–197, 203–225, 231–253, and 259–281; these read HACPDCGRAFARRSTLAKHARTH, FGCTECGRRFSQKSALTKHGRTH, YECPECDKRFSAASNLRQHRRRH, YACAHCGRRFAQSSNYAQHLRVH, YACPDCGRAFGGSSCLARHRRTH, YACADCGTRFAQSSALAKHRRVH, HRCAVCGRRFGHRSNLAEHARTH, and YPCAECGRRFRLSSHFIRHRRAH.

It belongs to the krueppel C2H2-type zinc-finger protein family.

The protein resides in the nucleus. May be involved in transcriptional regulation. The protein is Zinc finger protein 771 (ZNF771) of Homo sapiens (Human).